The following is a 192-amino-acid chain: MIKVSRKTNETDISVELNLYGMGKASIDTGVPFLDHMLDQVARHGLMDLTIKCDGDIQIDDHHSVEDIGITLGQAFVQAVGDKKGLIRYGYSYVPLDESLSRVVLDLSGRPSLKLNVSFTRAMIGTFDVDLISEFFQGFVNHALVTLHIDNLKGINSHHQAETIFKAFGRALRVAITEDERQEGIPSTKGSL.

Belongs to the imidazoleglycerol-phosphate dehydratase family.

The protein localises to the cytoplasm. The catalysed reaction is D-erythro-1-(imidazol-4-yl)glycerol 3-phosphate = 3-(imidazol-4-yl)-2-oxopropyl phosphate + H2O. Its pathway is amino-acid biosynthesis; L-histidine biosynthesis; L-histidine from 5-phospho-alpha-D-ribose 1-diphosphate: step 6/9. The polypeptide is Imidazoleglycerol-phosphate dehydratase (Vesicomyosocius okutanii subsp. Calyptogena okutanii (strain HA)).